The following is a 257-amino-acid chain: Taurine import ATP-binding protein TauB (257 aa).

The ABC transporter domain maps to 6–233; the sequence is LDKISIHYDG…RYAAGEPIRA (228 aa). 38–45 is a binding site for ATP; it reads GRSGCGKT.

It belongs to the ABC transporter superfamily. Taurine importer (TC 3.A.1.17.1) family. As to quaternary structure, the complex is composed of two ATP-binding proteins (TauB), two transmembrane proteins (TauC) and a solute-binding protein (TauA).

It localises to the cell inner membrane. It carries out the reaction taurine(out) + ATP + H2O = taurine(in) + ADP + phosphate + H(+). Functionally, part of the ABC transporter complex TauABC involved in taurine import. Responsible for energy coupling to the transport system. The protein is Taurine import ATP-binding protein TauB of Mesorhizobium japonicum (strain LMG 29417 / CECT 9101 / MAFF 303099) (Mesorhizobium loti (strain MAFF 303099)).